A 788-amino-acid polypeptide reads, in one-letter code: Choline transporter-like protein 1 (788 aa).

The chain crosses the membrane as a helical span at residues 98–118 (FLFFVFLCGWVVVASLGIMWG). Asparagine 276 carries N-linked (GlcNAc...) asparagine glycosylation. The next 4 helical transmembrane spans lie at 329-349 (WWQT…WTVI), 352-372 (LLGS…LGFG), 409-429 (FVVA…ILFI), and 458-478 (LFPF…AIWL). N-linked (GlcNAc...) asparagine glycosylation is present at asparagine 497. The next 5 helical transmembrane spans lie at 531–551 (LFAF…ALAG), 583–603 (LGSI…RVML), 620–640 (WFLM…KFLT), 679–699 (AGIL…ILSF), and 718–738 (YYFV…DLFF).

This sequence belongs to the CTL (choline transporter-like) family.

It localises to the membrane. The protein is Choline transporter-like protein 1 (chtl-1) of Caenorhabditis briggsae.